A 436-amino-acid chain; its full sequence is Zinc finger protein 101 (436 aa).

One can recognise a KRAB domain in the interval 4 to 82 (VAFEDVAVNF…RKEGNEHRET (79 aa)). The segment at 102 to 124 (CKCSVCGKVFLRHSFLDRHMRAH) adopts a C2H2-type 1 zinc-finger fold. The segment covering 128 to 141 (KRSECGGEWRETPR) has biased composition (basic and acidic residues). The interval 128 to 164 (KRSECGGEWRETPRKQKQHGKASISPSSGARRTVTPT) is disordered. The segment covering 151–163 (ISPSSGARRTVTP) has biased composition (polar residues). Residues 169 to 191 (YECKVCGKAFNSPNLFQIHQRTH) form a C2H2-type 2 zinc finger. The C2H2-type 3; degenerate zinc-finger motif lies at 197–219 (YKCREIVRAFTVSSFFRKHGKMH). C2H2-type zinc fingers lie at residues 225-247 (YECKYCGKPIDYPSLFQIHVRTH), 253-276 (YKCKQCGKAFISAGYLRTHEIRSH), 282-304 (HQCQECGKKLSCSSSLHRHERTH), 310-332 (YECQKCAKVFRCPTSLQAHERAH), 338-360 (YECNKCGKTFNYPSCFRRHKKTH), 366-388 (YECTRCGKAFGWCSSLRRHEMTH), and 394-416 (FDCKQCGKVFTFSNYLRLHERTH).

The protein belongs to the krueppel C2H2-type zinc-finger protein family. In terms of tissue distribution, expressed in a variety of adult and fetal tissues.

The protein resides in the nucleus. In terms of biological role, may be involved in transcriptional regulation. This chain is Zinc finger protein 101 (ZNF101), found in Homo sapiens (Human).